Here is a 406-residue protein sequence, read N- to C-terminus: Argininosuccinate synthase (406 aa).

Residues 12-20 (AYSGGLDTS) and A39 each bind ATP. L-citrulline contacts are provided by Y90 and S95. G120 serves as a coordination point for ATP. L-aspartate-binding residues include T122, N126, and D127. N126 contributes to the L-citrulline binding site. Residues R130, S179, S188, E264, and Y276 each coordinate L-citrulline.

The protein belongs to the argininosuccinate synthase family. Type 1 subfamily. In terms of assembly, homotetramer.

The protein resides in the cytoplasm. The enzyme catalyses L-citrulline + L-aspartate + ATP = 2-(N(omega)-L-arginino)succinate + AMP + diphosphate + H(+). It functions in the pathway amino-acid biosynthesis; L-arginine biosynthesis; L-arginine from L-ornithine and carbamoyl phosphate: step 2/3. This is Argininosuccinate synthase from Citrifermentans bemidjiense (strain ATCC BAA-1014 / DSM 16622 / JCM 12645 / Bem) (Geobacter bemidjiensis).